Reading from the N-terminus, the 381-residue chain is Flap endonuclease 1 (381 aa).

An N-domain region spans residues 1–105; that stretch reads MGIKNLATLI…YELDKRKVRR (105 aa). D34 contacts Mg(2+). DNA-binding residues include R47 and R71. D87, E156, E158, D177, and D179 together coordinate Mg(2+). The tract at residues 120 to 251 is I-domain; sequence EIIKHERRLV…VNALKLIKEH (132 aa). Residue E156 coordinates DNA. DNA-binding residues include G229 and D231. D231 serves as a coordination point for Mg(2+). Residues 339 to 347 are interaction with PCNA; sequence VQKRLDSFF. The tract at residues 360–381 is disordered; that stretch reads AAKKAKDAKKKAAAKGKIAKRR. Residues 365–381 are compositionally biased toward basic residues; it reads KDAKKKAAAKGKIAKRR.

The protein belongs to the XPG/RAD2 endonuclease family. FEN1 subfamily. Interacts with PCNA. Three molecules of FEN1 bind to one PCNA trimer with each molecule binding to one PCNA monomer. PCNA stimulates the nuclease activity without altering cleavage specificity. Requires Mg(2+) as cofactor. Post-translationally, phosphorylated. Phosphorylation upon DNA damage induces relocalization to the nuclear plasma.

It localises to the nucleus. It is found in the nucleolus. The protein resides in the nucleoplasm. The protein localises to the mitochondrion. Its function is as follows. Structure-specific nuclease with 5'-flap endonuclease and 5'-3' exonuclease activities involved in DNA replication and repair. During DNA replication, cleaves the 5'-overhanging flap structure that is generated by displacement synthesis when DNA polymerase encounters the 5'-end of a downstream Okazaki fragment. It enters the flap from the 5'-end and then tracks to cleave the flap base, leaving a nick for ligation. Also involved in the long patch base excision repair (LP-BER) pathway, by cleaving within the apurinic/apyrimidinic (AP) site-terminated flap. Acts as a genome stabilization factor that prevents flaps from equilibrating into structures that lead to duplications and deletions. Also possesses 5'-3' exonuclease activity on nicked or gapped double-stranded DNA, and exhibits RNase H activity. Also involved in replication and repair of rDNA and in repairing mitochondrial DNA. This chain is Flap endonuclease 1, found in Kluyveromyces lactis (strain ATCC 8585 / CBS 2359 / DSM 70799 / NBRC 1267 / NRRL Y-1140 / WM37) (Yeast).